A 256-amino-acid polypeptide reads, in one-letter code: Imidazole glycerol phosphate synthase subunit HisF (256 aa).

Residues D11 and D130 contribute to the active site.

Belongs to the HisA/HisF family. As to quaternary structure, heterodimer of HisH and HisF.

The protein resides in the cytoplasm. The catalysed reaction is 5-[(5-phospho-1-deoxy-D-ribulos-1-ylimino)methylamino]-1-(5-phospho-beta-D-ribosyl)imidazole-4-carboxamide + L-glutamine = D-erythro-1-(imidazol-4-yl)glycerol 3-phosphate + 5-amino-1-(5-phospho-beta-D-ribosyl)imidazole-4-carboxamide + L-glutamate + H(+). Its pathway is amino-acid biosynthesis; L-histidine biosynthesis; L-histidine from 5-phospho-alpha-D-ribose 1-diphosphate: step 5/9. Its function is as follows. IGPS catalyzes the conversion of PRFAR and glutamine to IGP, AICAR and glutamate. The HisF subunit catalyzes the cyclization activity that produces IGP and AICAR from PRFAR using the ammonia provided by the HisH subunit. This is Imidazole glycerol phosphate synthase subunit HisF from Psychrobacter sp. (strain PRwf-1).